Consider the following 270-residue polypeptide: tRNA pseudouridine synthase A (270 aa).

The active-site Nucleophile is the Asp-51. Position 109 (Tyr-109) interacts with substrate.

It belongs to the tRNA pseudouridine synthase TruA family. In terms of assembly, homodimer.

The enzyme catalyses uridine(38/39/40) in tRNA = pseudouridine(38/39/40) in tRNA. Functionally, formation of pseudouridine at positions 38, 39 and 40 in the anticodon stem and loop of transfer RNAs. The chain is tRNA pseudouridine synthase A from Burkholderia thailandensis (strain ATCC 700388 / DSM 13276 / CCUG 48851 / CIP 106301 / E264).